A 464-amino-acid polypeptide reads, in one-letter code: MILISQAYVFNKIWEIKTKNKSYLKCLLKYWTSHLWIKKNFQSFLSNQGIVGSLELQNFKEENWKEWLKGFNRYNFSSKEWYKITPQQWRNKVSEHWKNQENKKLNPNQQISKNNFFINTSILEQTKKRNKIFKQNLLTYSCFDFTKNLAIRNFLNLNRKKIYNNIIINKIQKSYFIYNKKAKYLDFFSQKQNIFFEYNLLLWLIPEFIEEKNQYQNKRILILKNSIIKENNKKIIQNQKLFRKRELNQSIRQWRWKSKSLEKKFKKLGNMASLMTFMQNQENIISLSSKMREDLKLFHLFFRRNTTINQLTINSEHRLARLLDDQILMYKMVSTFLNIKYRFKRLSNLDNFDDFLGIQFFENKEKNNFFFFNSFNLEDILLPKRRRKFRILNSLTSKNKKNTQLNQKFVQKKFSKTKIKKIKRFIWASYRFEDLACMNRFWFNTINGSRFSMLRFRMYPSLLT.

Belongs to the TIC214 family. Part of the Tic complex.

The protein localises to the plastid. It is found in the chloroplast. Functionally, involved in protein precursor import into chloroplasts. May be part of an intermediate translocation complex acting as a protein-conducting channel at the inner envelope. This is Putative protein TIC 214 C-terminal part from Marchantia polymorpha (Common liverwort).